The primary structure comprises 680 residues: DNA ligase (680 aa).

NAD(+) contacts are provided by residues 35 to 39 (DADFD), 86 to 87 (SL), and Glu-111. Lys-113 acts as the N6-AMP-lysine intermediate in catalysis. NAD(+) contacts are provided by Arg-134, Glu-174, Lys-290, and Lys-314. 4 residues coordinate Zn(2+): Cys-408, Cys-411, Cys-427, and Cys-433. The 84-residue stretch at 597-680 (VAEQTLEGLT…RLLNTGSADE (84 aa)) folds into the BRCT domain.

It belongs to the NAD-dependent DNA ligase family. LigA subfamily. The cofactor is Mg(2+). Mn(2+) serves as cofactor.

It catalyses the reaction NAD(+) + (deoxyribonucleotide)n-3'-hydroxyl + 5'-phospho-(deoxyribonucleotide)m = (deoxyribonucleotide)n+m + AMP + beta-nicotinamide D-nucleotide.. Its function is as follows. DNA ligase that catalyzes the formation of phosphodiester linkages between 5'-phosphoryl and 3'-hydroxyl groups in double-stranded DNA using NAD as a coenzyme and as the energy source for the reaction. It is essential for DNA replication and repair of damaged DNA. This is DNA ligase from Corynebacterium glutamicum (strain R).